The sequence spans 301 residues: uncharacterized protein (301 aa).

The N-terminal stretch at 1–28 (MFFREDKSVAFRLRSAALSGCATGQSDA) is a signal peptide.

This is an uncharacterized protein from Treponema pallidum (strain Nichols).